The primary structure comprises 1011 residues: Phosphoenolpyruvate carboxylase (1011 aa).

Catalysis depends on residues H207 and K658.

It belongs to the PEPCase type 1 family. The cofactor is Mg(2+).

It carries out the reaction oxaloacetate + phosphate = phosphoenolpyruvate + hydrogencarbonate. Its function is as follows. Forms oxaloacetate, a four-carbon dicarboxylic acid source for the tricarboxylic acid cycle. This is Phosphoenolpyruvate carboxylase (ppc) from Thermosynechococcus vestitus (strain NIES-2133 / IAM M-273 / BP-1).